We begin with the raw amino-acid sequence, 591 residues long: Tricyclene synthase, chloroplastic (591 aa).

Residues 1 to 45 (MATLLQIGSGVIYSNALRKTLRRPQSSTCIIVTETTPCNKSPTVQ) constitute a chloroplast transit peptide. Positions 302, 339, 343, 481, and 484 each coordinate (2E)-geranyl diphosphate. The Mg(2+) site is built by Asp339 and Asp343. Residues 339-343 (DDIYD) carry the DDXXD motif motif. 3 residues coordinate Mg(2+): Asn484, Thr488, and Glu492.

Belongs to the terpene synthase family. Tpsb subfamily. The cofactor is Mg(2+). Mn(2+) serves as cofactor. In terms of tissue distribution, predominantly expressed in flowers but also in leaves, siliques and in stems.

The protein localises to the plastid. Its subcellular location is the chloroplast stroma. The catalysed reaction is (2E)-geranyl diphosphate = beta-myrcene + diphosphate. The enzyme catalyses (2E)-geranyl diphosphate = tricyclene + diphosphate. It catalyses the reaction (2E)-geranyl diphosphate = (E)-beta-ocimene + diphosphate. Its pathway is secondary metabolite biosynthesis; terpenoid biosynthesis. Involved in monoterpene (C10) biosynthesis. The major product is beta-myrcene (56%) followed by (E)-beta-ocimene (20%) and minor amounts (less than 5%) of the cyclic monoterpene (-)-limonene, (+)-limonene, 2-carene and tricyclene. This chain is Tricyclene synthase, chloroplastic, found in Arabidopsis thaliana (Mouse-ear cress).